The following is a 474-amino-acid chain: PRAME family member 17 (474 aa).

The stretch at 97 to 124 is one LRR 1; degenerate repeat; sequence RWKLQVLDLRDVDGNFWTIWSGARALSC. One copy of the LRR 2; degenerate repeat lies at 179 to 203; that stretch reads HLCCNKVQNYSMPTSSFRNLLKRVY. The stretch at 204 to 230 is one LRR 3; degenerate repeat; that stretch reads PDSIQELEIKRKCSLNKTGKFAPYLSQ. One copy of the LRR 4; degenerate repeat lies at 231 to 265; it reads MSNLRKLFLAFGYDDELYVSGQQQFVPDLDCPFLC. LRR repeat units lie at residues 266 to 291, 292 to 323, 324 to 342, 348 to 375, and 376 to 400; these read LYYP…LRCL, KNPL…SQLK, ELHL…PLGA, AATL…ALSR, and CSQL…LLCH.

Belongs to the PRAME family.

The protein is PRAME family member 17 of Homo sapiens (Human).